A 366-amino-acid polypeptide reads, in one-letter code: Aminomethyltransferase (366 aa).

This sequence belongs to the GcvT family. The glycine cleavage system is composed of four proteins: P, T, L and H.

It carries out the reaction N(6)-[(R)-S(8)-aminomethyldihydrolipoyl]-L-lysyl-[protein] + (6S)-5,6,7,8-tetrahydrofolate = N(6)-[(R)-dihydrolipoyl]-L-lysyl-[protein] + (6R)-5,10-methylene-5,6,7,8-tetrahydrofolate + NH4(+). The glycine cleavage system catalyzes the degradation of glycine. This Bacillus velezensis (strain DSM 23117 / BGSC 10A6 / LMG 26770 / FZB42) (Bacillus amyloliquefaciens subsp. plantarum) protein is Aminomethyltransferase.